The chain runs to 313 residues: Olfactory receptor 5H1 (313 aa).

At 1–28 (MEEENATLLTEFVLTGFLYQPQWKIPLF) the chain is on the extracellular side. Asparagine 5 carries an N-linked (GlcNAc...) asparagine glycan. Residues 29 to 49 (LAFLVIYLITIMGNLGLIAVI) form a helical membrane-spanning segment. The Cytoplasmic portion of the chain corresponds to 50-56 (WKDPHLH). A helical transmembrane segment spans residues 57-77 (IPMYLLLGNLAFVDAWISSTV). The Extracellular portion of the chain corresponds to 78–98 (TPKMLNNFLAKSKMISLSECK). Cysteine 97 and cysteine 179 are oxidised to a cystine. Residues 99–119 (IQFFSFAISVTTECFLLATMA) traverse the membrane as a helical segment. Residues 120-143 (YDRYVAICKPLLYPAIMTNGLCIR) are Cytoplasmic-facing. Residues 144-164 (LLILSYVGGILHALIHEGFLF) traverse the membrane as a helical segment. The Extracellular portion of the chain corresponds to 165–195 (RLTFCNSNIVHHIYCDTIPLSKISCTDSSIN). A helical transmembrane segment spans residues 196 to 216 (FLMVFIFSGSIQVFSIVTILV). Residues 217–240 (SYTFVLFAILKKKSDKGVRKAFST) are Cytoplasmic-facing. Residues 241-261 (CGAHLFSVSLYYGPLLFIYVG) form a helical membrane-spanning segment. Residues 262–271 (PASPQADDQD) are Extracellular-facing. The helical transmembrane segment at 272–292 (MVEPLFYTVIIPLLNPIIYSL) threads the bilayer. Residues 293-313 (RNKQVTVSFTKMLKKHVKVSY) are Cytoplasmic-facing.

This sequence belongs to the G-protein coupled receptor 1 family.

It localises to the cell membrane. In terms of biological role, odorant receptor. The protein is Olfactory receptor 5H1 (OR5H1) of Homo sapiens (Human).